The chain runs to 676 residues: Potassium-transporting ATPase ATP-binding subunit (676 aa).

4 consecutive transmembrane segments (helical) span residues N24–P44, M45–F65, I212–T232, and S246–I266. D302 (4-aspartylphosphate intermediate) is an active-site residue. ATP contacts are provided by residues D339, E343, F372–S379, and K390. Mg(2+) contacts are provided by D513 and D517. 3 helical membrane-spanning segments follow: residues F573–I593, A611–L631, and G656–L676.

Belongs to the cation transport ATPase (P-type) (TC 3.A.3) family. Type IA subfamily. The system is composed of three essential subunits: KdpA, KdpB and KdpC.

The protein resides in the cell membrane. It catalyses the reaction K(+)(out) + ATP + H2O = K(+)(in) + ADP + phosphate + H(+). Its function is as follows. Part of the high-affinity ATP-driven potassium transport (or Kdp) system, which catalyzes the hydrolysis of ATP coupled with the electrogenic transport of potassium into the cytoplasm. This subunit is responsible for energy coupling to the transport system and for the release of the potassium ions to the cytoplasm. This Enterococcus faecalis (strain ATCC 700802 / V583) protein is Potassium-transporting ATPase ATP-binding subunit.